The sequence spans 113 residues: Small ribosomal subunit protein uS14m (113 aa).

The protein belongs to the universal ribosomal protein uS14 family. As to quaternary structure, component of the mitochondrial small ribosomal subunit (mt-SSU). Mature N.crassa 74S mitochondrial ribosomes consist of a small (37S) and a large (54S) subunit. The 37S small subunit contains a 16S ribosomal RNA (16S mt-rRNA) and 32 different proteins. The 54S large subunit contains a 23S rRNA (23S mt-rRNA) and 42 different proteins.

The protein localises to the mitochondrion. Component of the mitochondrial ribosome (mitoribosome), a dedicated translation machinery responsible for the synthesis of mitochondrial genome-encoded proteins, including at least some of the essential transmembrane subunits of the mitochondrial respiratory chain. The mitoribosomes are attached to the mitochondrial inner membrane and translation products are cotranslationally integrated into the membrane. The polypeptide is Small ribosomal subunit protein uS14m (mrp2) (Neurospora crassa (strain ATCC 24698 / 74-OR23-1A / CBS 708.71 / DSM 1257 / FGSC 987)).